Here is a 132-residue protein sequence, read N- to C-terminus: Small ribosomal subunit protein uS8 (132 aa).

This sequence belongs to the universal ribosomal protein uS8 family. Part of the 30S ribosomal subunit. Contacts proteins S5 and S12.

Functionally, one of the primary rRNA binding proteins, it binds directly to 16S rRNA central domain where it helps coordinate assembly of the platform of the 30S subunit. The protein is Small ribosomal subunit protein uS8 of Tropheryma whipplei (strain Twist) (Whipple's bacillus).